The following is a 69-amino-acid chain: Putative membrane protein insertion efficiency factor (69 aa).

It belongs to the UPF0161 family.

It is found in the cell inner membrane. Its function is as follows. Could be involved in insertion of integral membrane proteins into the membrane. This chain is Putative membrane protein insertion efficiency factor, found in Dechloromonas aromatica (strain RCB).